The chain runs to 319 residues: Malate dehydrogenase (319 aa).

NAD(+)-binding positions include 10-15 and Asp-34; that span reads GAGNIG. Substrate contacts are provided by Arg-83 and Arg-89. Residues Asn-96 and 119–121 contribute to the NAD(+) site; that span reads ITN. Substrate is bound by residues Asn-121 and Arg-152. Catalysis depends on His-176, which acts as the Proton acceptor.

This sequence belongs to the LDH/MDH superfamily. MDH type 3 family.

It carries out the reaction (S)-malate + NAD(+) = oxaloacetate + NADH + H(+). Its function is as follows. Catalyzes the reversible oxidation of malate to oxaloacetate. This is Malate dehydrogenase from Francisella tularensis subsp. holarctica (strain FTNF002-00 / FTA).